A 130-amino-acid polypeptide reads, in one-letter code: Large-conductance mechanosensitive channel (130 aa).

The Cytoplasmic segment spans residues 1–14 (MWNEFKAFAMRGNI). The chain crosses the membrane as a helical span at residues 15–43 (VDLAIGVVIGGAFGKIVTSLVNDIIMPLV). At 44-65 (GLLLGGLDFSGLSFTFGDAVVK) the chain is on the extracellular side. The chain crosses the membrane as a helical span at residues 66–85 (YGSFIQTIVNFLIISFSIFI). Residues 86–130 (VIRTLNGLRRKKEAEEEAAEEAVDAQEELLKEIRDLLKQQAKSPE) lie on the Cytoplasmic side of the membrane.

This sequence belongs to the MscL family. In terms of assembly, homopentamer.

It is found in the cell membrane. Channel that opens in response to stretch forces in the membrane lipid bilayer. Forms a nonselective ion channel with a conductance of about 4 nanosiemens. May participate in the regulation of osmotic pressure changes within the cell. This chain is Large-conductance mechanosensitive channel, found in Bacillus subtilis (strain 168).